The primary structure comprises 81 residues: Photosystem I iron-sulfur center (81 aa).

4Fe-4S ferredoxin-type domains lie at A2–W31 and I39–Y68. [4Fe-4S] cluster-binding residues include C11, C14, C17, C21, C48, C51, C54, and C58.

As to quaternary structure, the eukaryotic PSI reaction center is composed of at least 11 subunits. It depends on [4Fe-4S] cluster as a cofactor.

It is found in the plastid. It localises to the chloroplast thylakoid membrane. It carries out the reaction reduced [plastocyanin] + hnu + oxidized [2Fe-2S]-[ferredoxin] = oxidized [plastocyanin] + reduced [2Fe-2S]-[ferredoxin]. Apoprotein for the two 4Fe-4S centers FA and FB of photosystem I (PSI); essential for photochemical activity. FB is the terminal electron acceptor of PSI, donating electrons to ferredoxin. The C-terminus interacts with PsaA/B/D and helps assemble the protein into the PSI complex. Required for binding of PsaD and PsaE to PSI. PSI is a plastocyanin-ferredoxin oxidoreductase, converting photonic excitation into a charge separation, which transfers an electron from the donor P700 chlorophyll pair to the spectroscopically characterized acceptors A0, A1, FX, FA and FB in turn. In Gnetum parvifolium (Small-leaved jointfir), this protein is Photosystem I iron-sulfur center.